Here is a 425-residue protein sequence, read N- to C-terminus: Enolase (425 aa).

Q170 is a (2R)-2-phosphoglycerate binding site. E214 serves as the catalytic Proton donor. Mg(2+)-binding residues include D250, E291, and D317. The (2R)-2-phosphoglycerate site is built by K342, R371, S372, and K393. The active-site Proton acceptor is the K342.

This sequence belongs to the enolase family. Requires Mg(2+) as cofactor.

It localises to the cytoplasm. The protein localises to the secreted. Its subcellular location is the cell surface. It catalyses the reaction (2R)-2-phosphoglycerate = phosphoenolpyruvate + H2O. It functions in the pathway carbohydrate degradation; glycolysis; pyruvate from D-glyceraldehyde 3-phosphate: step 4/5. Catalyzes the reversible conversion of 2-phosphoglycerate (2-PG) into phosphoenolpyruvate (PEP). It is essential for the degradation of carbohydrates via glycolysis. The polypeptide is Enolase (Methanococcoides burtonii (strain DSM 6242 / NBRC 107633 / OCM 468 / ACE-M)).